A 384-amino-acid polypeptide reads, in one-letter code: N-acetyldiaminopimelate deacetylase (384 aa).

Residue aspartate 73 is part of the active site. The Proton acceptor role is filled by glutamate 132.

Belongs to the peptidase M20A family. N-acetyldiaminopimelate deacetylase subfamily.

It catalyses the reaction N-acetyl-(2S,6S)-2,6-diaminopimelate + H2O = (2S,6S)-2,6-diaminopimelate + acetate. Its pathway is amino-acid biosynthesis; L-lysine biosynthesis via DAP pathway; LL-2,6-diaminopimelate from (S)-tetrahydrodipicolinate (acetylase route): step 3/3. In terms of biological role, catalyzes the conversion of N-acetyl-diaminopimelate to diaminopimelate and acetate. The polypeptide is N-acetyldiaminopimelate deacetylase (Limosilactobacillus fermentum (strain NBRC 3956 / LMG 18251) (Lactobacillus fermentum)).